The following is a 328-amino-acid chain: Cytochrome c biogenesis protein CcsA (328 aa).

Transmembrane regions (helical) follow at residues 15–35 (FLVLFLTMMIYWVGAAFPSVP), 37–57 (LQALGTAGVAIANLCIAALLG), 68–88 (ISNLYESLFFLAWGVTAAHLI), 97–117 (LVGVVTTPVAMGISAFAALTL), 142–162 (VMMLSYATLMVGSALAIAFLF), 236–256 (IIGLGFPLLTIGIIAGAVWAN), 271–291 (WALITWLVFAAYLHARITKGW), and 297–317 (AILAASGFVVVWVCYLGVNLL).

The protein belongs to the CcmF/CycK/Ccl1/NrfE/CcsA family. May interact with ccs1.

The protein localises to the cellular thylakoid membrane. Required during biogenesis of c-type cytochromes (cytochrome c6 and cytochrome f) at the step of heme attachment. The protein is Cytochrome c biogenesis protein CcsA of Gloeothece citriformis (strain PCC 7424) (Cyanothece sp. (strain PCC 7424)).